We begin with the raw amino-acid sequence, 78 residues long: Large ribosomal subunit protein uL24 (78 aa).

The protein belongs to the universal ribosomal protein uL24 family. Part of the 50S ribosomal subunit.

In terms of biological role, one of two assembly initiator proteins, it binds directly to the 5'-end of the 23S rRNA, where it nucleates assembly of the 50S subunit. One of the proteins that surrounds the polypeptide exit tunnel on the outside of the subunit. In Helicobacter hepaticus (strain ATCC 51449 / 3B1), this protein is Large ribosomal subunit protein uL24.